A 254-amino-acid polypeptide reads, in one-letter code: 4-hydroxy-tetrahydrodipicolinate reductase (254 aa).

NAD(+) is bound at residue glycine 13 to methionine 18. Residue arginine 39 participates in NADP(+) binding. NAD(+)-binding positions include glycine 86–threonine 88 and alanine 110–threonine 113. Histidine 143 (proton donor/acceptor) is an active-site residue. Residue histidine 144 coordinates (S)-2,3,4,5-tetrahydrodipicolinate. Catalysis depends on lysine 147, which acts as the Proton donor. Glycine 153 to threonine 154 contributes to the (S)-2,3,4,5-tetrahydrodipicolinate binding site.

The protein belongs to the DapB family.

The protein localises to the cytoplasm. It carries out the reaction (S)-2,3,4,5-tetrahydrodipicolinate + NAD(+) + H2O = (2S,4S)-4-hydroxy-2,3,4,5-tetrahydrodipicolinate + NADH + H(+). It catalyses the reaction (S)-2,3,4,5-tetrahydrodipicolinate + NADP(+) + H2O = (2S,4S)-4-hydroxy-2,3,4,5-tetrahydrodipicolinate + NADPH + H(+). It functions in the pathway amino-acid biosynthesis; L-lysine biosynthesis via DAP pathway; (S)-tetrahydrodipicolinate from L-aspartate: step 4/4. Its function is as follows. Catalyzes the conversion of 4-hydroxy-tetrahydrodipicolinate (HTPA) to tetrahydrodipicolinate. In Zymomonas mobilis subsp. mobilis (strain ATCC 31821 / ZM4 / CP4), this protein is 4-hydroxy-tetrahydrodipicolinate reductase.